The chain runs to 164 residues: uncharacterized protein (164 aa).

The protein localises to the mitochondrion. This is an uncharacterized protein from Arabidopsis thaliana (Mouse-ear cress).